The following is an 859-amino-acid chain: ATP-dependent RNA helicase DDX24 (859 aa).

The residue at position 17 (K17) is an N6-acetyllysine. S60 is modified (phosphoserine). The interval 61–175 (PAKNPSSLFS…SQSTAAKVPK (115 aa)) is disordered. K71 is subject to N6-acetyllysine. Phosphoserine is present on residues S82 and S94. A compositionally biased stretch (acidic residues) spans 82–91 (SEEEEEEEGE). Positions 95–105 (PKKKIKLKKSK) are enriched in basic residues. The span at 106 to 115 (NVATEGTSTQ) shows a compositional bias: polar residues. The Q motif signature appears at 192–220 (SAWKDLFVPRPVLRALSFLGFSAPTPIQV). In terms of domain architecture, Helicase ATP-binding spans 224 to 528 (APAIRDKLDI…RILHKKHTKK (305 aa)). An ATP-binding site is contributed by 237-244 (AETGSGKT). The segment at 262–374 (NAAPPPSNTE…QTGNLKQELD (113 aa)) is disordered. Residues 277–293 (TRPEAGAETRSPGKAEA) show a composition bias toward basic and acidic residues. Phosphoserine is present on residues S287 and S295. A compositionally biased stretch (acidic residues) spans 294–304 (ESDALPDDTVI). T302 bears the Phosphothreonine mark. K370 is covalently cross-linked (Glycyl lysine isopeptide (Lys-Gly) (interchain with G-Cter in SUMO2)). Residues 471–474 (DEAD) carry the DEAD box motif. A Helicase C-terminal domain is found at 578-723 (YLYYFLMQYP…LFPVQTKYMD (146 aa)). Glycyl lysine isopeptide (Lys-Gly) (interchain with G-Cter in SUMO2) cross-links involve residues K624, K808, and K825. Polar residues-rich tracts occupy residues 799–814 (PLFT…TQSG) and 823–834 (PSKSESALSCLS). The segment at 799-859 (PLFTESQKTK…EQPQPSTSAN (61 aa)) is disordered.

The protein belongs to the DEAD box helicase family. DDX24/MAK5 subfamily. In terms of assembly, interacts with FADD. Interacts with RIPK1; this interaction disrupts RLR signaling activation of IFN-dependent transcription factor IRF7. Interacts with NIP7. Interacts with EP300; this interaction prevents TP53 acetylation mediated by EP300. Ubiquitinated by MDM2 without targeting DDX24 for proteasomal degradation. Instead, polyubiquitylated DDX24 promotes interaction with NIP7, a component of pre-rRNP processing complex, and associates with pre-rRNA molecules and pre-ribosomal particles.

Its subcellular location is the cytoplasm. The protein resides in the nucleus. It catalyses the reaction ATP + H2O = ADP + phosphate + H(+). Functionally, ATP-dependent RNA helicase that plays a role in various aspects of RNA metabolism including pre-mRNA splicing and is thereby involved in different biological processes such as cell cycle regulation or innate immunity. Plays an inhibitory role in TP53 transcriptional activity and subsequently in TP53 controlled cell growth arrest and senescence by inhibiting its EP300 mediated acetylation. Negatively regulates cytosolic RNA-mediated innate immune signaling at least in part by affecting RIPK1/IRF7 interactions. Alternatively, possesses antiviral activity by recognizing gammaherpesvirus transcripts in the context of lytic reactivation. Plays an essential role in cell cycle regulation in vascular smooth muscle cells by interacting with and regulating FANCA (Fanconi anemia complementation group A) mRNA. This chain is ATP-dependent RNA helicase DDX24 (DDX24), found in Pongo abelii (Sumatran orangutan).